Here is a 481-residue protein sequence, read N- to C-terminus: Transmembrane protein 39A (481 aa).

Transmembrane regions (helical) follow at residues 74 to 94, 109 to 129, 150 to 170, 182 to 202, 278 to 298, 313 to 333, 411 to 431, and 437 to 457; these read LFET…YINI, STSL…AVML, LCYV…GWVL, SVLK…LCCL, EVLF…LCFV, LIMV…PPHY, LLNV…YSLL, and NHTL…FKLL.

Belongs to the TMEM39 family.

It is found in the endoplasmic reticulum membrane. In terms of biological role, regulates autophagy by controlling the spatial distribution and levels of the intracellular phosphatidylinositol 4-phosphate (PtdIns(4)P) pools. Modulates (PtdIns(4)P) levels by regulating the ER-to-Golgi trafficking of the phosphatidylinositide phosphatase SACM1L. In Danio rerio (Zebrafish), this protein is Transmembrane protein 39A (tmem39a).